The chain runs to 522 residues: Protein nucleotidyltransferase YdiU (522 aa).

Residues glycine 109, glycine 111, arginine 112, lysine 132, aspartate 144, glycine 145, arginine 195, and arginine 202 each contribute to the ATP site. The active-site Proton acceptor is the aspartate 271. Asparagine 272 and aspartate 281 together coordinate Mg(2+). Aspartate 281 contributes to the ATP binding site.

It belongs to the SELO family. The cofactor is Mg(2+). Requires Mn(2+) as cofactor.

The catalysed reaction is L-seryl-[protein] + ATP = 3-O-(5'-adenylyl)-L-seryl-[protein] + diphosphate. It catalyses the reaction L-threonyl-[protein] + ATP = 3-O-(5'-adenylyl)-L-threonyl-[protein] + diphosphate. It carries out the reaction L-tyrosyl-[protein] + ATP = O-(5'-adenylyl)-L-tyrosyl-[protein] + diphosphate. The enzyme catalyses L-histidyl-[protein] + UTP = N(tele)-(5'-uridylyl)-L-histidyl-[protein] + diphosphate. The catalysed reaction is L-seryl-[protein] + UTP = O-(5'-uridylyl)-L-seryl-[protein] + diphosphate. It catalyses the reaction L-tyrosyl-[protein] + UTP = O-(5'-uridylyl)-L-tyrosyl-[protein] + diphosphate. In terms of biological role, nucleotidyltransferase involved in the post-translational modification of proteins. It can catalyze the addition of adenosine monophosphate (AMP) or uridine monophosphate (UMP) to a protein, resulting in modifications known as AMPylation and UMPylation. The chain is Protein nucleotidyltransferase YdiU from Burkholderia ambifaria (strain ATCC BAA-244 / DSM 16087 / CCUG 44356 / LMG 19182 / AMMD) (Burkholderia cepacia (strain AMMD)).